The chain runs to 448 residues: Phosphoglucosamine mutase (448 aa).

Residue serine 99 is the Phosphoserine intermediate of the active site. Serine 99, aspartate 238, aspartate 240, and aspartate 242 together coordinate Mg(2+). Position 99 is a phosphoserine (serine 99).

Belongs to the phosphohexose mutase family. Mg(2+) is required as a cofactor. In terms of processing, activated by phosphorylation.

It catalyses the reaction alpha-D-glucosamine 1-phosphate = D-glucosamine 6-phosphate. Its function is as follows. Catalyzes the conversion of glucosamine-6-phosphate to glucosamine-1-phosphate. The protein is Phosphoglucosamine mutase of Marinomonas sp. (strain MWYL1).